Reading from the N-terminus, the 627-residue chain is Protein CER1-like 1 (627 aa).

The next 5 membrane-spanning stretches (helical) occupy residues 19 to 39, 48 to 68, 126 to 146, 186 to 206, and 328 to 348; these read FKYLLVAPLVMASMHSYVTAV, LMIVVLMLWRIVHSQIWISVS, GAILMALLHAGPVEFLYYWFH, LLFAIPMVTASLCGILSIVSI, and YLTCFMWPFTLLCSFALTSAI. One can recognise a Fatty acid hydroxylase domain in the interval 138-272; it reads VEFLYYWFHR…MPIYDFIYGT (135 aa).

Belongs to the sterol desaturase family. In terms of tissue distribution, expressed in flowers and siliques. Not detected in pollen, pedicels and seeds.

The protein resides in the membrane. The protein is Protein CER1-like 1 of Arabidopsis thaliana (Mouse-ear cress).